A 237-amino-acid polypeptide reads, in one-letter code: Purine nucleoside phosphorylase DeoD-type (237 aa).

Position 4 (His-4) interacts with a purine D-ribonucleoside. Phosphate-binding positions include Gly-20, Arg-24, Arg-43, and 87–90; that span reads RVGT. Residues 179-181 and 203-204 each bind a purine D-ribonucleoside; these read EME and SD. Asp-204 (proton donor) is an active-site residue.

The protein belongs to the PNP/UDP phosphorylase family. Homohexamer; trimer of homodimers.

It catalyses the reaction a purine D-ribonucleoside + phosphate = a purine nucleobase + alpha-D-ribose 1-phosphate. The catalysed reaction is a purine 2'-deoxy-D-ribonucleoside + phosphate = a purine nucleobase + 2-deoxy-alpha-D-ribose 1-phosphate. In terms of biological role, catalyzes the reversible phosphorolytic breakdown of the N-glycosidic bond in the beta-(deoxy)ribonucleoside molecules, with the formation of the corresponding free purine bases and pentose-1-phosphate. This chain is Purine nucleoside phosphorylase DeoD-type, found in Streptococcus pyogenes serotype M12 (strain MGAS2096).